Consider the following 325-residue polypeptide: Alkanal monooxygenase beta chain (325 aa).

Belongs to the bacterial luciferase oxidoreductase family. Heterodimer of an alpha and a beta chain.

The enzyme catalyses a long-chain fatty aldehyde + FMNH2 + O2 = a long-chain fatty acid + hnu + FMN + H2O + 2 H(+). Its function is as follows. Light-emitting reaction in luminous bacteria. The specific role of the beta subunit is unknown, but it is absolutely required for bioluminescence activity. The polypeptide is Alkanal monooxygenase beta chain (luxB) (Photobacterium leiognathi).